The sequence spans 76 residues: Putative UPF0377 protein YGL260W (76 aa).

This sequence belongs to the UPF0377 family.

In Saccharomyces cerevisiae (strain ATCC 204508 / S288c) (Baker's yeast), this protein is Putative UPF0377 protein YGL260W.